Here is a 515-residue protein sequence, read N- to C-terminus: MDEFHRYGKEDNSRQQCFLYPLFFQEDLYAISHDHYLDGSSSSEPMEHLSSNDQFSFLTVKRLIGQIRQQNHSIVLFVNCAPNPLADCKKSSYSESVLEGLTLVLEVPFSIRSKYSVEGMNEWKSFRSIHSIFPFLEDKFPHSNYISDARIPYSIHPEILVRTFRRLIRDAPSLHPLRSVLYEYRNSPENLQRSIIVVPRVNTRFFLFLWNYYVYECESILFSLLKRSSHSRSLSHRPFPQRTHFHRKIKHIIIFSRRNSLKSIWLLKDPKINYVRYGERSIIAIKGTHLLVKKCRYYLLLFRQCYFHLWSEPYRVCSHQLSKNCSSSPGYFLRVRMNPLFVRTKMLDELFIADLITNEFDPIVPIVPILGLLAREKFCDVSGRPISKLSWTNLTDDDILNRFDQIWRNLFHYYSGSFGRDGLYRIKYILSLSCAKTLACKHKSTIRVVRKELGPELFQKSFSKEREFDSLPFSSKAAARSQRERIWHSDIPQINPLVNSWQKIQDLKIENLFDQ.

Belongs to the intron maturase 2 family. MatK subfamily.

It is found in the plastid. The protein resides in the chloroplast. In terms of biological role, usually encoded in the trnK tRNA gene intron. Probably assists in splicing its own and other chloroplast group II introns. This chain is Maturase K, found in Pinus koraiensis (Korean pine).